A 585-amino-acid chain; its full sequence is Parathyroid hormone/parathyroid hormone-related peptide receptor (585 aa).

An N-terminal signal peptide occupies residues 1–26; that stretch reads MGAPRISHSLALLLCCSVLSSVYALV. Residues 27–185 lie on the Extracellular side of the membrane; that stretch reads DADDVITKEE…REREVFDRLG (159 aa). Cystine bridges form between Cys-48–Cys-114, Cys-105–Cys-145, and Cys-128–Cys-167. Residues 69 to 90 are disordered; the sequence is MSRSAKTKKEKPAEKLYSQAEE. N-linked (GlcNAc...) asparagine glycosylation is found at Asn-148, Asn-158, Asn-163, and Asn-173. Residues 186–209 traverse the membrane as a helical segment; sequence MIYTVGYSISLGSLTVAVLILGYF. The Cytoplasmic segment spans residues 210 to 216; that stretch reads RRLHCTR. Residues 217 to 236 form a helical membrane-spanning segment; sequence NYIHMHLFVSFMLRAVSIFI. The Extracellular portion of the chain corresponds to 237 to 276; that stretch reads KDAVLYSGVSTDEIERITEEELRAFTEPPPADKAGFVGCR. The chain crosses the membrane as a helical span at residues 277–300; sequence VAVTVFLYFLTTNYYWILVEGLYL. Residues 301–314 are Cytoplasmic-facing; it reads HSLIFMAFFSEKKY. The helical transmembrane segment at 315 to 336 threads the bilayer; sequence LWGFTLFGWGLPAVFVAVWVTV. Residues 337–355 lie on the Extracellular side of the membrane; that stretch reads RATLANTECWDLSSGNKKW. The chain crosses the membrane as a helical span at residues 356 to 376; that stretch reads IIQVPILAAIVVNFILFINII. Topologically, residues 377–403 are cytoplasmic; it reads RVLATKLRETNAGRCDTRQQYRKLLKS. The chain crosses the membrane as a helical span at residues 404 to 422; the sequence is TLVLMPLFGVHYIVFMATP. Residues 423 to 434 are Extracellular-facing; that stretch reads YTEVSGILWQVQ. Residues 435 to 457 traverse the membrane as a helical segment; sequence MHYEMLFNSFQGFFVAIIYCFCN. At 458–585 the chain is on the cytoplasmic side; it reads GEVQAEIKKS…LLEEERETVM (128 aa). An Important for interaction with G proteins motif is present at residues 468–471; sequence WSRW. The disordered stretch occupies residues 531–585; it reads PGYVKHGSISENSLPSSGPEPGTKDDGYLNGSGLYEPMVGEQPPPLLEEERETVM.

It belongs to the G-protein coupled receptor 2 family. Homodimer in the absence of bound ligand. Peptide hormone binding leads to dissociation of the homodimer. N-glycosylated.

It is found in the cell membrane. In terms of biological role, G-protein-coupled receptor for parathyroid hormone (PTH) and for parathyroid hormone-related peptide (PTHLH). Ligand binding causes a conformation change that triggers signaling via guanine nucleotide-binding proteins (G proteins) and modulates the activity of downstream effectors, such as adenylate cyclase (cAMP). PTH1R is coupled to G(s) G alpha proteins and mediates activation of adenylate cyclase activity. PTHLH dissociates from PTH1R more rapidly than PTH; as consequence, the cAMP response induced by PTHLH decays faster than the response induced by PTH. This is Parathyroid hormone/parathyroid hormone-related peptide receptor (PTH1R) from Didelphis virginiana (North American opossum).